A 333-amino-acid polypeptide reads, in one-letter code: Meiotic recombination protein rec24 (333 aa).

The protein belongs to the MEI4L family. In terms of assembly, interacts with Rec7, as part of the meiotic recombination initiation complex.

The protein resides in the cytoplasm. It is found in the nucleus. Required for correct meiotic chromosome segregation and recombination. Accessory protein required for Rec12 activity, which is involved in formation of the double-strand breaks (DSBs) that initiate meiotic recombination. This chain is Meiotic recombination protein rec24 (rec24), found in Schizosaccharomyces pombe (strain 972 / ATCC 24843) (Fission yeast).